The chain runs to 481 residues: MQVADKTVVIAGLGVSGTSLAEVLRERGTHVIGVDERKPEADLHSFDDVDWDHVDYVMSSPVFNPRTPFVLEAQRRGIPVMSEVEFAWQLRVNNERTGTPAPWIGITGTNGKTSTTEMTSEMLTACGLDAPTAGNIASGDMSMSLSRCATNPQHDVLCVELSSFQLHFTDSLALDCAAITNIADDHLDWHGGRENYAADKSKVFHNAKRAIVYNAQDAKVSELAAEAQTAEGCRKVGFTLEAPQAGQIGIEDGWIVDRSGVAGGAVGESVRLAAITDFTHLAEPDGSLYPHLVADALTALALVLGLGADRDTALKALTSFKPGGHRIETVAEAAVEGGSVRFVDDSKATNGHAARASLSSFPAKSVIWIAGGLAKGSRFEDLVKDQAHTIKAAVIIGKDQQPMIEAFASQAPDIPVTIIDPEDNDTVMDRAVEACGTYTAAGDIVLMAPACASMDQFKSYADRGNRFAAAAKTWSEVHGLH.

108 to 114 contacts ATP; it reads GTNGKTS.

This sequence belongs to the MurCDEF family.

It is found in the cytoplasm. The catalysed reaction is UDP-N-acetyl-alpha-D-muramoyl-L-alanine + D-glutamate + ATP = UDP-N-acetyl-alpha-D-muramoyl-L-alanyl-D-glutamate + ADP + phosphate + H(+). It functions in the pathway cell wall biogenesis; peptidoglycan biosynthesis. Its function is as follows. Cell wall formation. Catalyzes the addition of glutamate to the nucleotide precursor UDP-N-acetylmuramoyl-L-alanine (UMA). In Bifidobacterium longum (strain DJO10A), this protein is UDP-N-acetylmuramoylalanine--D-glutamate ligase.